The following is a 146-amino-acid chain: Globin-2B (146 aa).

In terms of domain architecture, Globin spans 9-146 (QLTADVKKDL…KLVGVVQAAL (138 aa)). His-101 is a heme b binding site.

It belongs to the globin family. Homodimer.

This Anadara trapezia (Sydney cockle) protein is Globin-2B.